Here is a 444-residue protein sequence, read N- to C-terminus: Argininosuccinate synthase (444 aa).

Residues 18-26 (AFSGGLDTS) and A44 contribute to the ATP site. Residue Y100 participates in L-citrulline binding. ATP is bound by residues G130 and T132. L-aspartate contacts are provided by T132, N136, and D137. N136 serves as a coordination point for L-citrulline. D137 lines the ATP pocket. 2 residues coordinate L-citrulline: R140 and S193. ATP is bound at residue D195. L-citrulline-binding residues include T202, E204, and E281.

Belongs to the argininosuccinate synthase family. Type 2 subfamily. As to quaternary structure, homotetramer.

The protein localises to the cytoplasm. It catalyses the reaction L-citrulline + L-aspartate + ATP = 2-(N(omega)-L-arginino)succinate + AMP + diphosphate + H(+). Its pathway is amino-acid biosynthesis; L-arginine biosynthesis; L-arginine from L-ornithine and carbamoyl phosphate: step 2/3. This is Argininosuccinate synthase from Mannheimia succiniciproducens (strain KCTC 0769BP / MBEL55E).